A 278-amino-acid chain; its full sequence is 2-heptyl-3-hydroxy-4-quinolone dioxygenase AqdC1 (278 aa).

The region spanning 29-158 (PTIVMLPGWC…GWVDSCRALF (130 aa)) is the AB hydrolase-1 domain. Residue histidine 103 participates in substrate binding. Residue histidine 250 is the Proton donor/acceptor of the active site.

It belongs to the AB hydrolase superfamily.

The catalysed reaction is 2-heptyl-3-hydroxy-4(1H)-quinolone + O2 = N-octanoylanthranilate + CO + H(+). Its function is as follows. Involved in the degradation of the Pseudomonas aeruginosa quorum sensing signal molecules HHQ (2-heptyl-4-quinolone) and PQS (2-heptyl-3-hydroxy-4-quinolone) to anthranilic acid. Catalyzes the cleavage of PQS to form N-octanoylanthranilic acid and carbon monoxide. The sequence is that of 2-heptyl-3-hydroxy-4-quinolone dioxygenase AqdC1 from Rhodococcus erythropolis (Arthrobacter picolinophilus).